The primary structure comprises 300 residues: uncharacterized protein (300 aa).

An N-terminal signal peptide occupies residues 1–22; it reads MKSFVWTLLGALSLGSLTTAYG.

The protein localises to the endoplasmic reticulum. This is an uncharacterized protein from Schizosaccharomyces pombe (strain 972 / ATCC 24843) (Fission yeast).